The sequence spans 343 residues: Fructose-1,6-bisphosphatase class 1 (343 aa).

Mg(2+)-binding residues include glutamate 90, aspartate 109, leucine 111, and aspartate 112. Substrate-binding positions include 112-115 (DGSS) and asparagine 199. Glutamate 271 contacts Mg(2+).

This sequence belongs to the FBPase class 1 family. As to quaternary structure, homotetramer. Mg(2+) serves as cofactor.

The protein localises to the cytoplasm. It carries out the reaction beta-D-fructose 1,6-bisphosphate + H2O = beta-D-fructose 6-phosphate + phosphate. It functions in the pathway carbohydrate biosynthesis; Calvin cycle. This chain is Fructose-1,6-bisphosphatase class 1, found in Rhodopseudomonas palustris (strain ATCC BAA-98 / CGA009).